The primary structure comprises 396 residues: Glyceraldehyde-3-phosphate dehydrogenase GAPA1, chloroplastic (396 aa).

The transit peptide at Met1–Ala60 directs the protein to the chloroplast. Residues Arg71 to Ile72, Asp95, and Arg140 contribute to the NADP(+) site. Residues Ser212–Thr214, Thr243, Arg258, Thr271–Gly272, and Arg294 each bind D-glyceraldehyde 3-phosphate. Residue Cys213 is the Nucleophile of the active site. Asn376 is an NADP(+) binding site.

Belongs to the glyceraldehyde-3-phosphate dehydrogenase family. As to quaternary structure, tetramer of either four A chains (GAPDH 2) or two A and two B chains (GAPDH 1). As to expression, expressed in leaves and stems.

Its subcellular location is the plastid. The protein resides in the chloroplast membrane. It localises to the chloroplast stroma. It carries out the reaction D-glyceraldehyde 3-phosphate + phosphate + NADP(+) = (2R)-3-phospho-glyceroyl phosphate + NADPH + H(+). It participates in carbohydrate biosynthesis; Calvin cycle. Functionally, involved in the photosynthetic reductive pentose phosphate pathway (Calvin-Benson cycle). Catalyzes the reduction of 1,3-diphosphoglycerate by NADPH. This is Glyceraldehyde-3-phosphate dehydrogenase GAPA1, chloroplastic (GAPA1) from Arabidopsis thaliana (Mouse-ear cress).